The chain runs to 296 residues: Cytidine deaminase (296 aa).

CMP/dCMP-type deaminase domains are found at residues 48–168 (DADA…FGPV) and 187–296 (QNMN…FIEE). 89 to 91 (NME) serves as a coordination point for substrate. His-102 is a Zn(2+) binding site. Glu-104 (proton donor) is an active-site residue. Cys-129 and Cys-132 together coordinate Zn(2+).

This sequence belongs to the cytidine and deoxycytidylate deaminase family. As to quaternary structure, homodimer. Zn(2+) is required as a cofactor.

It catalyses the reaction cytidine + H2O + H(+) = uridine + NH4(+). It carries out the reaction 2'-deoxycytidine + H2O + H(+) = 2'-deoxyuridine + NH4(+). In terms of biological role, this enzyme scavenges exogenous and endogenous cytidine and 2'-deoxycytidine for UMP synthesis. In Pectobacterium carotovorum subsp. carotovorum (strain PC1), this protein is Cytidine deaminase.